A 279-amino-acid polypeptide reads, in one-letter code: Coiled-coil domain-containing protein 106 (279 aa).

The stretch at 62 to 101 (KAQLHMALERNSWLQKRIEDLEEERDFLRCQLDKFISSAR) forms a coiled coil. Over residues 109–121 (RMKPGPRRVDGDS) the composition is skewed to basic and acidic residues. Residues 109–173 (RMKPGPRRVD…FGKTKARERQ (65 aa)) form a disordered region. A Phosphoserine modification is found at serine 129. The short motif at 151 to 164 (KRQKQKGSTSRKRF) is the Bipartite nuclear localization signal element. Over residues 151–167 (KRQKQKGSTSRKRFGKT) the composition is skewed to basic residues.

As to quaternary structure, interacts with p53/TP53.

It localises to the nucleus. Its function is as follows. Promotes the degradation of p53/TP53 protein and inhibits its transactivity. The sequence is that of Coiled-coil domain-containing protein 106 (Ccdc106) from Mus musculus (Mouse).